The primary structure comprises 266 residues: Vitamin B12-binding protein (266 aa).

The first 22 residues, 1 to 22, serve as a signal peptide directing secretion; it reads MAKQMFRALGALLLTLPVWLYA. Positions 25–266 constitute a Fe/B12 periplasmic-binding domain; it reads RVITLSPANT…QLCNALSQVN (242 aa). Residues Y50 and 242–246 contribute to the cyanocob(III)alamin site; that span reads DWFER. A disulfide bridge connects residues C183 and C259.

This sequence belongs to the BtuF family. In terms of assembly, the complex is composed of two ATP-binding proteins (BtuD), two transmembrane proteins (BtuC) and a solute-binding protein (BtuF).

The protein resides in the periplasm. Part of the ABC transporter complex BtuCDF involved in vitamin B12 import. Binds vitamin B12 and delivers it to the periplasmic surface of BtuC. The polypeptide is Vitamin B12-binding protein (Salmonella typhi).